A 198-amino-acid chain; its full sequence is Host transcription reprogramming factor 1 (198 aa).

A signal peptide spans 1–19; it reads MQLSNFLSIWALVAMGATA. Disordered stretches follow at residues 21-59 and 71-198; these read PMPS…SYHS and ERLA…PVQL. The segment at 58–81 adopts a C2H2-type zinc-finger fold; it reads HSCETCAAPFRTEERLAAHRQADH. Basic and acidic residues-rich tracts occupy residues 71–80, 104–128, and 167–177; these read ERLAAHRQAD, TSER…RSQE, and KLDKPTRKEQY.

It localises to the secreted. The protein localises to the host nucleus. Its function is as follows. Secreted effector that translocates into the nuclei of host cells to reprogram the expression of immunity-associated genes by binding to effector binding elements (EBEs) in rice. Binds the 5'-CAATCTTC-3' EBE of promoters from targeted rice genes and probably recruits a yet to be determined host repressor. Causes ambivalent immunity with increased susceptibility to the hemibiotrophic pathogens Magnaporthe oryzae and Xanthomonas oryzae pv. oryzae, but enhances resistance to Cochliobolus miyabeanus, a necrotrophic pathogen. This is Host transcription reprogramming factor 1 from Pyricularia oryzae (strain 70-15 / ATCC MYA-4617 / FGSC 8958) (Rice blast fungus).